A 357-amino-acid polypeptide reads, in one-letter code: 5-hydroxytryptamine receptor 5A (357 aa).

Residues 1-36 (MDLPVNLTSFSLSTPSPLETNHSLGKDDLRPSSPLL) lie on the Extracellular side of the membrane. N-linked (GlcNAc...) asparagine glycans are attached at residues N6 and N21. Residues 37 to 63 (SVFGVLILTLLGFLVAATFAWNLLVLA) traverse the membrane as a helical segment. Residues 64–76 (TILRVRTFHRVPH) are Cytoplasmic-facing. Residues 77 to 103 (NLVASMAVSDVLVAALVMPLSLVHELS) traverse the membrane as a helical segment. At 104–114 (GRRWQLGRRLC) the chain is on the extracellular side. Residues C114 and C192 are joined by a disulfide bond. The chain crosses the membrane as a helical span at residues 115–137 (QLWIACDVLCCTASIWNVTAIAL). D121 contacts serotonin. Over 138–155 (DRYWSITRHMEYTLRTRK) the chain is Cytoplasmic. The helical transmembrane segment at 156-176 (CVSNVMIALTWALSAVISLAP) threads the bilayer. The Extracellular segment spans residues 177 to 198 (LLFGWGETYSEGSEECQVSREP). A helical membrane pass occupies residues 199–220 (SYAVFSTVGAFYLPLCVVLFVY). At 221–287 (WKIYKAAKFR…QKEQRAALMV (67 aa)) the chain is on the cytoplasmic side. The helical transmembrane segment at 288 to 312 (GILIGVFVLCWIPFFLTELISPLCS) threads the bilayer. Residues 313 to 314 (CD) are Extracellular-facing. Residues 315-339 (IPAIWKSIFLWLGYSNSFFNPLIYT) traverse the membrane as a helical segment. The Cytoplasmic portion of the chain corresponds to 340-357 (AFNKNYNSAFKNFFSRQH).

It belongs to the G-protein coupled receptor 1 family.

The protein resides in the cell membrane. In terms of biological role, G-protein coupled receptor for 5-hydroxytryptamine (serotonin), a biogenic hormone that functions as a neurotransmitter, a hormone and a mitogen. Also functions as a receptor for ergot alkaloid derivatives and other psychoactive substances. Ligand binding causes a conformation change that triggers signaling via guanine nucleotide-binding proteins (G proteins) and modulates the activity of downstream effectors. HTR5A is coupled to G(i)/G(o) G alpha proteins and mediates inhibitory neurotransmission: signaling inhibits adenylate cyclase activity and activates a phosphatidylinositol-calcium second messenger system that regulates the release of Ca(2+) ions from intracellular stores. The sequence is that of 5-hydroxytryptamine receptor 5A from Homo sapiens (Human).